Reading from the N-terminus, the 341-residue chain is Hydrogenase expression/formation protein HupE (341 aa).

It belongs to the HypE family.

Its function is as follows. May be involved in the maturation of the NifE hydrogenase. This is Hydrogenase expression/formation protein HupE (hupE) from Azotobacter chroococcum mcd 1.